We begin with the raw amino-acid sequence, 252 residues long: 2-succinyl-6-hydroxy-2,4-cyclohexadiene-1-carboxylate synthase (252 aa).

The protein belongs to the AB hydrolase superfamily. MenH family. As to quaternary structure, monomer.

The catalysed reaction is 5-enolpyruvoyl-6-hydroxy-2-succinyl-cyclohex-3-ene-1-carboxylate = (1R,6R)-6-hydroxy-2-succinyl-cyclohexa-2,4-diene-1-carboxylate + pyruvate. Its pathway is quinol/quinone metabolism; 1,4-dihydroxy-2-naphthoate biosynthesis; 1,4-dihydroxy-2-naphthoate from chorismate: step 3/7. The protein operates within quinol/quinone metabolism; menaquinone biosynthesis. Functionally, catalyzes a proton abstraction reaction that results in 2,5-elimination of pyruvate from 2-succinyl-5-enolpyruvyl-6-hydroxy-3-cyclohexene-1-carboxylate (SEPHCHC) and the formation of 2-succinyl-6-hydroxy-2,4-cyclohexadiene-1-carboxylate (SHCHC). This is 2-succinyl-6-hydroxy-2,4-cyclohexadiene-1-carboxylate synthase from Escherichia coli O157:H7.